Here is a 446-residue protein sequence, read N- to C-terminus: Probable cytosolic iron-sulfur protein assembly protein 1 (446 aa).

7 WD repeats span residues 17 to 59 (AFKP…AHSN), 63 to 106 (GHTR…PLEE), 143 to 182 (GHENEIKSAAFSPSGQYLATCSRDKSIWIWEDVGANEGDD), 192 to 241 (EHDG…EWAC), 247 to 291 (GHSS…PEAS), 330 to 368 (VHTRDIYSASWSKNGRVASTGSDGSILVYEECAPSNPST), and 398 to 446 (GHGP…SIEL). Over residues 106–128 (EGTKKGESTEIDVTRRRNNNDSD) the composition is skewed to basic and acidic residues. Residues 106 to 133 (EGTKKGESTEIDVTRRRNNNDSDKDNDD) are disordered.

The protein belongs to the WD repeat CIA1 family.

Its function is as follows. Essential component of the cytosolic iron-sulfur (Fe/S) protein assembly machinery. Required for the maturation of extramitochondrial Fe/S proteins. The sequence is that of Probable cytosolic iron-sulfur protein assembly protein 1 from Pyricularia oryzae (strain 70-15 / ATCC MYA-4617 / FGSC 8958) (Rice blast fungus).